A 439-amino-acid chain; its full sequence is Nuclear distribution protein PAC1 (439 aa).

The stretch at 55–90 forms a coiled coil; it reads NSIVRLQSKIMELEKNCEELQKSIDEQQSSTNQISN. WD repeat units follow at residues 106 to 145, 149 to 193, 199 to 240, 243 to 282, 295 to 335, 355 to 392, and 402 to 438; these read TLDA…LPLQ, AHMD…TLSH, GHEH…CIKS, PHTQ…SMGI, IPDP…FIPH, DHNS…LSTT, and NKGF…TSFM.

This sequence belongs to the WD repeat LIS1/nudF family. Self-associates. Interacts with NDL1 and dynein.

Its subcellular location is the cytoplasm. The protein localises to the cytoskeleton. It is found in the spindle pole. In terms of biological role, positively regulates the activity of the minus-end directed microtubule motor protein dynein. Plays a central role in positioning the mitotic spindle at the bud neck during cell division. Targets cytoplasmic dynein to microtubule plus ends, thereby promoting dynein-mediated microtubule sliding along the bud cortex and consequently the movement of the mitotic spindle to the bud neck. This chain is Nuclear distribution protein PAC1, found in Kluyveromyces lactis (strain ATCC 8585 / CBS 2359 / DSM 70799 / NBRC 1267 / NRRL Y-1140 / WM37) (Yeast).